A 571-amino-acid chain; its full sequence is MERAVRVESGVLVGVVCLLLACPATATGPEVAQPEVDTTLGRVRGRQVGVKGTDRLVNVFLGIPFAQPPLGPDRFSAPHPAQPWEGVRDASTAPPMCLQDVESMNSSRFVLNGKQQIFSVSEDCLVLNVYSPAEVPAGSGRPVMVWVHGGALITGAATSYDGSALAAYGDVVVVTVQYRLGVLGFFSTGDEHAPGNQGFLDVVAALRWVQENIAPFGGDLNCVTVFGGSAGGSIISGLVLSPVAAGLFHRAITQSGVITTPGIIDSHPWPLAQKIANTLACSSSSPAEMVQCLQQKEGEELVLSKKLKNTIYPLTVDGTVFPKSPKELLKEKPFHSVPFLMGVNNHEFSWLIPRGWGLLDTMEQMSREDMLAISTPVLTSLDVPPEMMPTVIDEYLGSNSDAQAKCQAFQEFMGDVFINVPTVSFSRYLRDSGSPVFFYEFQHRPSSFAKIKPAWVKADHGAEGAFVFGGPFLMDESSRLAFPEATEEEKQLSLTMMAQWTHFARTGDPNSKALPPWPQFNQAEQYLEINPVPRAGQKFREAWMQFWSETLPSKIQQWHQKQKNRKAQEDL.

A signal peptide spans M1–A26. The cysteines at positions 97 and 124 are disulfide-linked. N105 carries an N-linked (GlcNAc...) asparagine glycan. Catalysis depends on S229, which acts as the Acyl-ester intermediate. C281 and C292 form a disulfide bridge. Catalysis depends on charge relay system residues E347 and H460. A Prevents secretion from ER motif is present at residues Q568–L571.

This sequence belongs to the type-B carboxylesterase/lipase family. Post-translationally, N-glycosylated. Expressed in liver, colon and small intestine.

The protein localises to the endoplasmic reticulum lumen. It carries out the reaction a carboxylic ester + H2O = an alcohol + a carboxylate + H(+). Functionally, involved in the detoxification of xenobiotics and in the activation of ester and amide prodrugs. Shows low catalytic efficiency for hydrolysis of CPT-11 (7-ethyl-10-[4-(1-piperidino)-1-piperidino]-carbonyloxycamptothecin), a prodrug for camptothecin used in cancer therapeutics. The chain is Carboxylesterase 3 (CES3) from Homo sapiens (Human).